Reading from the N-terminus, the 993-residue chain is Signal peptide, CUB and EGF-like domain-containing protein 3 (993 aa).

The first 20 residues, 1–20 (MGSGRVPGLCLLVLLVHARA), serve as a signal peptide directing secretion. The region spanning 29–69 (DVDECVEGTDNCHIDAICQNTPRSYKCICKSGYTGDGKHCK) is the EGF-like 1; calcium-binding domain. Cystine bridges form between Cys33-Cys46, Cys40-Cys55, Cys57-Cys68, Cys74-Cys86, Cys82-Cys95, Cys97-Cys110, Cys116-Cys127, Cys123-Cys136, Cys161-Cys172, Cys168-Cys182, Cys184-Cys197, Cys201-Cys212, Cys208-Cys221, Cys223-Cys236, Cys240-Cys251, Cys247-Cys260, Cys262-Cys275, Cys281-Cys292, Cys288-Cys301, Cys303-Cys316, Cys322-Cys332, Cys328-Cys341, Cys343-Cys355, Cys361-Cys372, Cys368-Cys381, and Cys383-Cys397. The EGF-like 2; calcium-binding domain occupies 70 to 111 (DVDECEREDNAGCVHDCVNIPGNYRCTCYDGFHLAHDGHNCL). Residues 112–148 (DVDECAEGNGGCQQSCVNMMGSYECHCREGFFLSDNQ) enclose the EGF-like 3; calcium-binding domain. EGF-like domains are found at residues 157–198 (EGMN…RDCK), 199–237 (LTCN…KTCI), and 238–276 (ETCA…KTCK). Positions 277 to 317 (DIDECRLNNGGCDHICRNTVGSFECSCKKGYKLLINERNCQ) constitute an EGF-like 7; calcium-binding domain. The EGF-like 8; calcium-binding domain occupies 318–356 (DIDECSFDRTCDHICVNTPGSFQCLCHRGYLLYGITHCG). An EGF-like 9; calcium-binding domain is found at 357-398 (DVDECSINRGGCRFGCINTPGSYQCTCPAGQGRLHWNGKDCT). Residues Asn417, Asn464, Asn685, Asn756, and Asn785 are each glycosylated (N-linked (GlcNAc...) asparagine). Intrachain disulfides connect Cys804/Cys830 and Cys857/Cys878. Residues 804–916 (CGGELGEFTG…RGFQIPYVTY (113 aa)) enclose the CUB domain.

In terms of assembly, forms homooligomers. Forms heterooligomers with SCUBE1 and SCUBE2. Interacts with TGFBR2 through the CUB domain; this interaction does not affect TGFB1-binding to TGFBR2. Interacts with BMP2, BMP4 and BMP7; the interaction is mediated by the CUB domain. Interacts with BMPR1A, BMPR1B and BMPR2; the interaction with BMPR1A and BMPR1B is BMP2- and BMP4-dependent. Post-translationally, N-glycosylated. In terms of processing, proteolytic cleavage produces a CUB-containing C-terminal fragment that retains the ability to bind to TGFBR2. This reaction is catalyzed in vitro by MMP2 and, to a lesser extent, by MMP9. As to expression, highly expressed in osteoblasts. In normal lung, mainly expressed in bronchial epithelial cells. Tends to be up-regulated in lung cancer cells.

It is found in the secreted. Its subcellular location is the cell surface. In terms of biological role, is a positive regulator of the BMP signaling pathway, required for proper chondrogenesis, osteogenesis and skeletal development. It acts as a coreceptor for BMP ligands, particularly BMP2 and BMP4, facilitating their interactions with BMP type I receptors. It is required for ligand-induced recruitment of BMP receptors to lipid rafts. Binds to TGFBR2 and activates TGFB signaling. In lung cancer cells, could serve as an endogenous autocrine and paracrine ligand of TGFBR2, which could regulate TGFBR2 signaling and hence modulate epithelial-mesenchymal transition and cancer progression. The polypeptide is Signal peptide, CUB and EGF-like domain-containing protein 3 (Homo sapiens (Human)).